The following is a 132-amino-acid chain: Antileukoproteinase (132 aa).

A signal peptide spans 1-25; the sequence is MKSSGLFPFLVLLALGTLAPWAVEG. WAP domains lie at 28–76 and 82–130; these read KSFK…LDPV and TRRK…VSPV. Cystine bridges form between cysteine 35/cysteine 64, cysteine 43/cysteine 68, cysteine 51/cysteine 63, cysteine 57/cysteine 72, cysteine 89/cysteine 118, cysteine 96/cysteine 122, cysteine 105/cysteine 117, and cysteine 111/cysteine 126. Residues 84–132 are elastase inhibitory domain; the sequence is RKPGKCPVTYGQCLMLNPPNFCEMDGQCKRDLKCCMGMCGKSCVSPVKA.

As to quaternary structure, interacts with GRN; interaction protects progranulin from proteolysis. In terms of tissue distribution, detected in blood plasma. Detected in bone marrow myeloid cells. Detected in airway sputum. Detected in parotid gland secretions. Detected in seminal plasma (at protein level). Detected in uterus cervix.

The protein resides in the secreted. Acid-stable proteinase inhibitor with strong affinities for trypsin, chymotrypsin, elastase, and cathepsin G. Modulates the inflammatory and immune responses after bacterial infection, and after infection by the intracellular parasite L.major. Down-regulates responses to bacterial lipopolysaccharide (LPS). Plays a role in regulating the activation of NF-kappa-B and inflammatory responses. Has antimicrobial activity against mycobacteria, but not against salmonella. Contributes to normal resistance against infection by M.tuberculosis. Required for normal resistance to infection by L.major. Required for normal wound healing, probably by preventing tissue damage by limiting protease activity. Together with ELANE, required for normal differentiation and proliferation of bone marrow myeloid cells. This Homo sapiens (Human) protein is Antileukoproteinase (SLPI).